The sequence spans 50 residues: Mast cell degranulating peptide (50 aa).

The N-terminal stretch at 1–27 (MISMLRCTFFFVSVILITSYFVTPTMS) is a signal peptide. Lys29 is subject to N6-formyllysine. An intrachain disulfide couples Cys30 to Cys42. An N6-formyllysine mark is found at Lys44 and Lys48. Asn49 carries the post-translational modification Asparagine amide.

As to expression, expressed by the venom gland.

It localises to the secreted. Its function is as follows. Potent anti-inflammatory agent. At low concentrations, mediates the degranulation of mast cells thus evoking an inflammatory response. Also acts as a neurotoxin capable of blocking a class of voltage-gated potassium channels. The chain is Mast cell degranulating peptide from Apis cerana cerana (Oriental honeybee).